A 275-amino-acid chain; its full sequence is 4-diphosphocytidyl-2-C-methyl-D-erythritol kinase (275 aa).

Lys-14 is an active-site residue. 98-108 (PMGAGLGGGSS) contacts ATP. Asp-140 is an active-site residue.

Belongs to the GHMP kinase family. IspE subfamily.

It catalyses the reaction 4-CDP-2-C-methyl-D-erythritol + ATP = 4-CDP-2-C-methyl-D-erythritol 2-phosphate + ADP + H(+). It functions in the pathway isoprenoid biosynthesis; isopentenyl diphosphate biosynthesis via DXP pathway; isopentenyl diphosphate from 1-deoxy-D-xylulose 5-phosphate: step 3/6. Functionally, catalyzes the phosphorylation of the position 2 hydroxy group of 4-diphosphocytidyl-2C-methyl-D-erythritol. In Francisella tularensis subsp. holarctica (strain FTNF002-00 / FTA), this protein is 4-diphosphocytidyl-2-C-methyl-D-erythritol kinase.